Here is a 433-residue protein sequence, read N- to C-terminus: Adenylosuccinate synthetase (433 aa).

Residues 11 to 17 and 39 to 41 each bind GTP; these read GDEGKGK and GHT. Residue D12 is the Proton acceptor of the active site. Residues D12 and G39 each coordinate Mg(2+). IMP is bound by residues 12–15, 37–40, T134, R148, N230, T245, and R309; these read DEGK and NAGH. Residue H40 is the Proton donor of the active site. 305–311 contacts substrate; sequence VTTGRKR. Residues R311, 337 to 339, and 419 to 421 each bind GTP; these read KLD and GTG.

Belongs to the adenylosuccinate synthetase family. In terms of assembly, homodimer. Requires Mg(2+) as cofactor.

The protein localises to the cytoplasm. The enzyme catalyses IMP + L-aspartate + GTP = N(6)-(1,2-dicarboxyethyl)-AMP + GDP + phosphate + 2 H(+). The protein operates within purine metabolism; AMP biosynthesis via de novo pathway; AMP from IMP: step 1/2. In terms of biological role, plays an important role in the de novo pathway and in the salvage pathway of purine nucleotide biosynthesis. Catalyzes the first committed step in the biosynthesis of AMP from IMP. This is Adenylosuccinate synthetase from Eremothecium gossypii (strain ATCC 10895 / CBS 109.51 / FGSC 9923 / NRRL Y-1056) (Yeast).